A 37-amino-acid chain; its full sequence is Cytochrome b6-f complex subunit 5 (37 aa).

The helical transmembrane segment at 5–25 threads the bilayer; sequence LLCGIVLGLVPVTIAGLFVTA.

This sequence belongs to the PetG family. The 4 large subunits of the cytochrome b6-f complex are cytochrome b6, subunit IV (17 kDa polypeptide, PetD), cytochrome f and the Rieske protein, while the 4 small subunits are PetG, PetL, PetM and PetN. The complex functions as a dimer.

Its subcellular location is the plastid. The protein resides in the chloroplast thylakoid membrane. Functionally, component of the cytochrome b6-f complex, which mediates electron transfer between photosystem II (PSII) and photosystem I (PSI), cyclic electron flow around PSI, and state transitions. PetG is required for either the stability or assembly of the cytochrome b6-f complex. This chain is Cytochrome b6-f complex subunit 5, found in Chlamydomonas reinhardtii (Chlamydomonas smithii).